An 86-amino-acid chain; its full sequence is Large ribosomal subunit protein eL43 (86 aa).

A C4-type zinc finger spans residues 38–59; the sequence is CPVCGRKAVRRISTGIWQCQKC.

The protein belongs to the eukaryotic ribosomal protein eL43 family. Zn(2+) serves as cofactor.

This Thermococcus onnurineus (strain NA1) protein is Large ribosomal subunit protein eL43.